The primary structure comprises 1091 residues: MGEGTTKENNNAEFNAYHTLTAEEAAEFIGTSLTEGLTQDEFVHRLKTVGENTLGDDTKIDYKAMVLHQVCNAMIMVLLISMIISFAMHDWITGGVISFVIAVNVLIGLVQEYKATKTMNSLKNLSSPNAHVIRNGKSETINSKDVVPGDICLVKVGDTIPADLRLIETKNFDTDESLLTGESLPVSKDANLVFGKEEETSVGDRLNLAFSSSAVVKGRAKGIVIKTALNSEIGKIAKSLQGDSGLISRDPSKSWLQNTWISTKKVTGAFLGTNVGTPLHRKLSKLAVLLFWIAVLFAIIVMASQKFDVDKRVAIYAICVALSMIPSSLVVVLTITMSVGAAVMVSRNVIVRKLDSLEALGAVNDICSDKTGTLTQGKMLARQIWIPRFGTITISNSDDPFNPNEGNVSLIPRFSPYEYSHNEDGDVGILQNFKDRLYEKDLPEDIDMDLFQKWLETATLANIATVFKDDATDCWKAHGDPTEIAIQVFATKMDLPHNALTGEKSTNQSNENDQSSLSQHNEKPGSAQFEHIAEFPFDSTVKRMSSVYYNNHNETYNIYGKGAFESIISCCSSWYGKDGVKITPLTDCDVETIRKNVYSLSNEGLRVLGFASKSFTKDQVNDDQLKNITSNRATAESDLVFLGLIGIYDPPRNETAGAVKKFHQAGINVHMLTGDFVGTAKAIAQEVGILPTNLYHYSQEIVDSMVMTGSQFDGLSEEEVDDLPVLPLVIARCSPQTKVRMIEALHRRKKFCTMTGDGVNDSPSLKMANVGIAMGINGSDVSKEASDIVLSDDNFASILNAVEEGRRMTDNIQKFVLQLLAENVAQALYLIIGLVFRDENGKSVFPLSPVEVLWIIVVTSCFPAMGLGLEKAAPDLMDRPPHDSEVGIFTWEVIIDTFAYGIIMTGSCMASFTGSLYGINSGRLGHDCDGTYNSSCRDVYRSRSAAFATMTWCALILAWEVVDMRRSFFRMHPDTDSPVKEFFRSIWGNQFLFWSIIFGFVSAFPVVYIPVINDKVFLHKPIGAEWGLAIAFTIAFWIGAELYKCGKRRYFKTQRAHNPENDLESNNKRDPFEAYSTSTTIHTEVNIGIKQ.

At 1–63 (MGEGTTKENN…LGDDTKIDYK (63 aa)) the chain is on the cytoplasmic side. A helical membrane pass occupies residues 64 to 84 (AMVLHQVCNAMIMVLLISMII). The Extracellular segment spans residues 85-90 (SFAMHD). The chain crosses the membrane as a helical span at residues 91 to 111 (WITGGVISFVIAVNVLIGLVQ). Residues 112–282 (EYKATKTMNS…TNVGTPLHRK (171 aa)) are Cytoplasmic-facing. The helical transmembrane segment at 283-303 (LSKLAVLLFWIAVLFAIIVMA) threads the bilayer. Residues 304 to 312 (SQKFDVDKR) are Extracellular-facing. The chain crosses the membrane as a helical span at residues 313 to 333 (VAIYAICVALSMIPSSLVVVL). The Cytoplasmic portion of the chain corresponds to 334–815 (TITMSVGAAV…RRMTDNIQKF (482 aa)). Residue D369 is the 4-aspartylphosphate intermediate of the active site. Mg(2+)-binding residues include D369 and T371. Residues T371 and E483 each contribute to the ATP site. The disordered stretch occupies residues 499 to 525 (ALTGEKSTNQSNENDQSSLSQHNEKPG). The span at 503-519 (EKSTNQSNENDQSSLSQ) shows a compositional bias: polar residues. Positions 561, 606, 673, 674, 675, 732, and 738 each coordinate ATP. D757 provides a ligand contact to Mg(2+). Position 760 (N760) interacts with ATP. Residues 816–836 (VLQLLAENVAQALYLIIGLVF) traverse the membrane as a helical segment. The Extracellular segment spans residues 837–848 (RDENGKSVFPLS). A helical transmembrane segment spans residues 849 to 869 (PVEVLWIIVVTSCFPAMGLGL). The Cytoplasmic portion of the chain corresponds to 870–885 (EKAAPDLMDRPPHDSE). Residues 886 to 906 (VGIFTWEVIIDTFAYGIIMTG) traverse the membrane as a helical segment. The Extracellular segment spans residues 907–943 (SCMASFTGSLYGINSGRLGHDCDGTYNSSCRDVYRSR). Residues 944–964 (SAAFATMTWCALILAWEVVDM) form a helical membrane-spanning segment. The Cytoplasmic segment spans residues 965–991 (RRSFFRMHPDTDSPVKEFFRSIWGNQF). The chain crosses the membrane as a helical span at residues 992 to 1012 (LFWSIIFGFVSAFPVVYIPVI). Residues 1013–1021 (NDKVFLHKP) are Extracellular-facing. Residues 1022-1042 (IGAEWGLAIAFTIAFWIGAEL) form a helical membrane-spanning segment. Over 1043-1091 (YKCGKRRYFKTQRAHNPENDLESNNKRDPFEAYSTSTTIHTEVNIGIKQ) the chain is Cytoplasmic.

This sequence belongs to the cation transport ATPase (P-type) (TC 3.A.3) family. Type IID subfamily. Requires Mg(2+) as cofactor. In terms of processing, the active site is phosphorylated in presence of sodium or potassium and in conditions of higher pH. Not phosphorylated in presence of calcium ions.

It is found in the cell membrane. It catalyses the reaction Na(+)(in) + ATP + H2O = Na(+)(out) + ADP + phosphate + H(+). The enzyme catalyses K(+)(in) + ATP + H2O = K(+)(out) + ADP + phosphate + H(+). Its function is as follows. Catalyzes the hydrolysis of ATP coupled with the export of sodium and potassium from the cell. May export potassium less efficiently. May transport other cations such as lithium. Sodium/potassium efflux ATPases are involved in salt tolerance and maintaining the membrane potential across the plasma membrane in high salinity (Na+) or alkaline (K+) environments. Is negatively modulated by SIS2/HAL3. The sequence is that of Sodium/potassium exporting P-type ATPase 1 from Saccharomyces cerevisiae (strain ATCC 204508 / S288c) (Baker's yeast).